The chain runs to 101 residues: Small ribosomal subunit protein uS14 (101 aa).

It belongs to the universal ribosomal protein uS14 family. In terms of assembly, part of the 30S ribosomal subunit. Contacts proteins S3 and S10.

Its function is as follows. Binds 16S rRNA, required for the assembly of 30S particles and may also be responsible for determining the conformation of the 16S rRNA at the A site. In Shewanella sp. (strain MR-4), this protein is Small ribosomal subunit protein uS14.